The chain runs to 492 residues: Bifunctional purine biosynthesis protein PurH (492 aa).

In terms of domain architecture, MGS-like spans Met1–Val144.

It belongs to the PurH family.

The enzyme catalyses (6R)-10-formyltetrahydrofolate + 5-amino-1-(5-phospho-beta-D-ribosyl)imidazole-4-carboxamide = 5-formamido-1-(5-phospho-D-ribosyl)imidazole-4-carboxamide + (6S)-5,6,7,8-tetrahydrofolate. It carries out the reaction IMP + H2O = 5-formamido-1-(5-phospho-D-ribosyl)imidazole-4-carboxamide. Its pathway is purine metabolism; IMP biosynthesis via de novo pathway; 5-formamido-1-(5-phospho-D-ribosyl)imidazole-4-carboxamide from 5-amino-1-(5-phospho-D-ribosyl)imidazole-4-carboxamide (10-formyl THF route): step 1/1. It participates in purine metabolism; IMP biosynthesis via de novo pathway; IMP from 5-formamido-1-(5-phospho-D-ribosyl)imidazole-4-carboxamide: step 1/1. The polypeptide is Bifunctional purine biosynthesis protein PurH (Staphylococcus saprophyticus subsp. saprophyticus (strain ATCC 15305 / DSM 20229 / NCIMB 8711 / NCTC 7292 / S-41)).